Here is a 1877-residue protein sequence, read N- to C-terminus: Neuron navigator 1 (1877 aa).

Met-1 carries the N-acetylmethionine modification. The segment at 1-59 (MLGSSVKSVQPEVELSSGGGDEGADEPRGAGRKAAAADGRGMLPKRAKAPGGGGGMAKA) is disordered. Low complexity predominate over residues 32–41 (RKAAAADGRG). Phosphoserine is present on residues Ser-90, Ser-142, and Ser-152. A disordered region spans residues 114–225 (DMAKAPKGLG…PVPSAKGQEE (112 aa)). Thr-159 carries the post-translational modification Phosphothreonine. Phosphoserine occurs at positions 194 and 199. Positions 205-214 (SSKAKAQKSS) are enriched in low complexity. Positions 255–280 (ESQRKRTVQNVLDLRQNLEETMSSLR) form a coiled coil. The disordered stretch occupies residues 294 to 336 (YDSDDANPRSVSSLSNRSSPLSWRYGQSSPRLQAGDAPSVGGS). Phosphoserine occurs at positions 296, 308, 312, 362, and 391. A compositionally biased stretch (low complexity) spans 301-315 (PRSVSSLSNRSSPLS). Disordered stretches follow at residues 386 to 839 (KSGY…PLPS) and 892 to 989 (MSLP…PMSL). Low complexity-rich tracts occupy residues 411–425 (DESSSISSGLSDASD) and 433–448 (NASSSLNSLPSTPTAS). Ser-452, Ser-474, Ser-476, and Ser-490 each carry phosphoserine. Over residues 476–486 (SEEKAPKKLEY) the composition is skewed to basic and acidic residues. Positions 503–519 (ERPESCDDSSKGGELKK) are enriched in basic and acidic residues. Ser-528 carries the phosphoserine modification. Position 534 is a phosphothreonine (Thr-534). Phosphoserine is present on Ser-541. Thr-544 carries the phosphothreonine modification. Over residues 555 to 566 (GKPEGKATDKGK) the composition is skewed to basic and acidic residues. Phosphothreonine is present on Thr-572. Residues 581–591 (AGRDRLSDAKK) are compositionally biased toward basic and acidic residues. 2 stretches are compositionally biased toward polar residues: residues 615–635 (GTATVMQTGGSATLSKIQKSS) and 645–655 (RKTSLDVSNSA). Ser-648 bears the Phosphoserine mark. Arg-688 is subject to Omega-N-methylarginine. Composition is skewed to polar residues over residues 698–710 (IDPSLLSTKQGGL) and 724–733 (GRTTPAPVNQ). A coiled-coil region spans residues 731 to 756 (VNQTDREKEKAKAKAVALDSDNISLK). A phosphoserine mark is found at Ser-750, Ser-754, Ser-760, Ser-797, and Ser-808. A compositionally biased stretch (polar residues) spans 751–773 (DNISLKSIGSPESTPKNQASHPT). Residues 805–818 (NSNSLDLPSSSDTT) are compositionally biased toward low complexity. The segment covering 902 to 913 (TPVPTPPAPPAA) has biased composition (pro residues). Ser-1000 is modified (phosphoserine). Position 1006 is a phosphothreonine (Thr-1006). The stretch at 1072–1163 (SSAEERMQSE…SEAQAVIQGA (92 aa)) forms a coiled coil. Residue Thr-1170 is modified to Phosphothreonine. Disordered stretches follow at residues 1172 to 1204 (KELRIKRQNSSDSISSLNSITSHSSIGSSKDAD), 1244 to 1306 (ATPD…EKKE), 1359 to 1383 (LKVAPGPSSGSTPGQVPGSSALSSP), and 1810 to 1843 (KLYHLPPPTVGPHSIASPPEDRTVKDSTPSSLDS). A Phosphoserine modification is found at Ser-1181. Residues 1181 to 1200 (SSDSISSLNSITSHSSIGSS) are compositionally biased toward low complexity. The segment covering 1246–1264 (PDSSAPSSPKLQHGSTETA) has biased composition (polar residues). The residue at position 1265 (Ser-1265) is a Phosphoserine. Over residues 1265–1275 (SPSIKSSTSSS) the composition is skewed to low complexity. Residues 1303–1362 (EKKEVSELRSELWEKEMKLTDIRLEALNSAHQLDQLRETMHNMQLEVDLLKAENDRLKVA) are a coiled coil. A compositionally biased stretch (polar residues) spans 1366-1383 (SSGSTPGQVPGSSALSSP). Ser-1382 is modified (phosphoserine).

The protein belongs to the Nav/unc-53 family. As to quaternary structure, interacts with tubulin. As to expression, broadly expressed at low levels. Expressed at high levels in heart, skeletal muscle and placenta.

The protein resides in the cytoplasm. It is found in the cytoskeleton. Its function is as follows. May be involved in neuronal migration. The protein is Neuron navigator 1 (NAV1) of Homo sapiens (Human).